Here is a 307-residue protein sequence, read N- to C-terminus: Zinc-alpha-2-glycoprotein (307 aa).

The signal sequence occupies residues 1–17 (MVPVLLSLPLLLGPAVF). Glutamine 18 carries the pyrrolidone carboxylic acid modification. A disulfide bond links cysteine 118 and cysteine 181. N-linked (GlcNAc...) asparagine glycans are attached at residues asparagine 123, asparagine 190, and asparagine 254. The Ig-like C1-type domain maps to 202–287 (PTVTITSRVI…DHRGFSQSLS (86 aa)). The cysteines at positions 220 and 275 are disulfide-linked.

The protein belongs to the MHC class I family. As to quaternary structure, interacts with PIP.

It is found in the secreted. In terms of biological role, stimulates lipid degradation in adipocytes and causes the extensive fat losses associated with some advanced cancers. The chain is Zinc-alpha-2-glycoprotein (Azgp1) from Mus musculus (Mouse).